The primary structure comprises 834 residues: MKYKNLMARALYDNVPECAEELAFRKGDILTVIEQNTGGLEGWWLCSLHGRQGIVPGNRVKLLIGPMQETASSHEQPASGLMQQTFGQQKLYQVPNPQAAPRDTIYQVPPSYQNQGIYQVPTGHGTQEQEVYQVPPSVQRSIGGTSGPHVGKKVITPVRTGHGYVYEYPSRYQKDVYDIPPSHTTQGVYDIPPSSAKGPVFSVPVGEIKPQGVYDIPPTKGVYAIPPSACRDEAGLREKDYDFPPPMRQAGRPDLRPEGVYDIPPTCTKPAGKDLHVKYNCDIPGAAEPVARRHQSLSPNHPPPQLGQSVGSQNDAYDVPRGVQFLEPPAETSEKANPQERDGVYDVPLHNPPDAKGSRDLVDGINRLSFSSTGSTRSNMSTSSTSSKESSLSASPAQDKRLFLDPDTAIERLQRLQQALEMGVSSLMALVTTDWRCYGYMERHINEIRTAVDKVELFLKEYLHFVKGAVANAACLPELILHNKMKRELQRVEDSHQILSQTSHDLNECSWSLNILAINKPQNKCDDLDRFVMVAKTVPDDAKQLTTTINTNAEALFRPGPGSLHLKNGPESIMNSTEYPHGGSQGQLLHPGDHKAQAHNKALPPGLSKEQAPDCSSSDGSERSWMDDYDYVHLQGKEEFERQQKELLEKENIMKQNKMQLEHHQLSQFQLLEQEITKPVENDISKWKPSQSLPTTNSGVSAQDRQLLCFYYDQCETHFISLLNAIDALFSCVSSAQPPRIFVAHSKFVILSAHKLVFIGDTLTRQVTAQDIRNKVMNSSNQLCEQLKTIVMATKMAALHYPSTTALQEMVHQVTDLSRNAQLFKRSLLEMATF.

The required for interaction with ITCH stretch occupies residues 1–505 (MKYKNLMARA…HQILSQTSHD (505 aa)). Residues 3–65 (YKNLMARALY…PGNRVKLLIG (63 aa)) enclose the SH3 domain. Phosphotyrosine; by ABL1 is present on residues Tyr92, Tyr164, Tyr166, Tyr177, Tyr189, Tyr214, and Tyr223. Positions 102 to 229 (RDTIYQVPPS…KGVYAIPPSA (128 aa)) are interacts strongly with spindle-regulatory protein D1M1. The interval 238–260 (EKDYDFPPPMRQAGRPDLRPEGV) is disordered. Tyr279 carries the phosphotyrosine; by ABL1 modification. Residues 291 to 316 (ARRHQSLSPNHPPPQLGQSVGSQNDA) form a disordered region. A Phosphoserine modification is found at Ser296. Positions 306-315 (LGQSVGSQND) are enriched in polar residues. Phosphotyrosine; by ABL1 is present on Tyr317. Disordered stretches follow at residues 328-398 (PPAE…SPAQ) and 560-623 (GPGS…GSER). The segment covering 332–344 (TSEKANPQERDGV) has biased composition (basic and acidic residues). Positions 351–834 (NPPDAKGSRD…KRSLLEMATF (484 aa)) are interacts with CTTN. Residues 360–363 (DLVD) carry the Caspase cleavage related site motif. Ser369 carries the post-translational modification Phosphoserine. Over residues 369-395 (SFSSTGSTRSNMSTSSTSSKESSLSAS) the composition is skewed to low complexity. The segment at 710-760 (FYYDQCETHFISLLNAIDALFSCVSSAQPPRIFVAHSKFVILSAHKLVFIG) is divergent helix-loop-helix motif. The required for interaction with PLK1 stretch occupies residues 710–834 (FYYDQCETHF…KRSLLEMATF (125 aa)). The residue at position 780 (Ser780) is a Phosphoserine; by CSNK1D and CSNK1E. Thr804 is subject to Phosphothreonine; by CSNK1E.

The protein belongs to the CAS family. Homodimer. Forms heterodimers with BCAR1/p130cas. Forms complexes with PTK2B/RAFTK, adapter protein CRKL and LYN kinase. Part of a complex composed of NEDD9, AURKA and CTTN; within the complex NEDD9 acts as a scaffold protein and is required for complex formation. Part of a ternary complex composed of SMAD3, ITCH/AIP4 and NEDD9/HEF1; within the complex NEDD9/HEF1 interacts (via N-terminus) with ITCH/AIP4 (via WW domains); the complex mediates ubiquitination and proteasomal degradation of NEDD9/HEF1. Interacts with SMAD3; the interaction promotes NEDD9 ubiquitination and proteasomal degradation. Interacts with ID2. Interacts with CTTN (via N-terminus). Interacts with MICAL. Interacts with TXNL4/DIM1. Interacts with BCAR3 (via Ras-GEF domain). Interacts with SH2D3C isoform 1 and isoform 2. Interacts with ECT2. Interacts with PTPN11/SHP-2 (via SH2 domains); the interaction is enhanced when NEDD9/CAS-L is tyrosine phosphorylated. Interacts (via C-terminus) with PLK1 (via polo box domains). Interacts with NKX2-5. Interacts with SMAD3; the interaction is inhibited by oxidation of NEDD9. Interacts with NEDD9/HEF1; interaction is induced by CXCL12 promotion of ABL-mediated phosphorylation of NEDD9/HEF1. Interacts (via SH3 domain) with PTK2/FAK. Interacts with FYN; in the presence of PTK2. Interacts with INPPL1/SHIP2. Post-translationally, cell cycle-regulated processing produces four isoforms: p115, p105, p65, and p55. Isoform p115 arises from p105 phosphorylation and appears later in the cell cycle. Isoform p55 arises from p105 as a result of cleavage at a caspase cleavage-related site and it appears specifically at mitosis. The p65 isoform is poorly detected. Polyubiquitinated by ITCH/AIP4, leading to proteasomal degradation. In terms of processing, PTK2/FAK1 phosphorylates the protein at the YDYVHL motif (conserved among all cas proteins) following integrin stimulation. The SRC family kinases (FYN, SRC, LCK and CRK) are recruited to the phosphorylated sites and can phosphorylate other tyrosine residues. Ligation of either integrin beta-1 or B-cell antigen receptor on tonsillar B-cells and B-cell lines promotes tyrosine phosphorylation and both integrin and BCR-mediated tyrosine phosphorylation requires an intact actin network. Phosphorylation is required to recruit NEDD9 to T-cell receptor microclusters at the periphery of newly formed immunological synapses. In fibroblasts transformation with oncogene v-ABL results in an increase in tyrosine phosphorylation. Transiently phosphorylated following CD3 cross-linking and this phosphorylated form binds to CRKL and C3G. A mutant lacking the SH3 domain is phosphorylated upon CD3 cross-linking but not upon integrin beta-1 cross-linking. Tyrosine phosphorylation occurs upon stimulation of the G-protein coupled C1a calcitonin receptor. Calcitonin-stimulated tyrosine phosphorylation is mediated by calcium- and protein kinase C-dependent mechanisms and requires the integrity of the actin cytoskeleton. Phosphorylation at Ser-369 induces proteasomal degradation. Phosphorylated by LYN. Phosphorylation at Ser-780 by CSNK1D or CSNK1E, or phosphorylation of Thr-804 by CSNK1E enhances the interaction of NEDD9 with PLK1. Expressed in B-cells (at protein level). Expressed in the respiratory epithelium of the main bronchi to the bronchioles in the lungs (at protein level). High levels detected in kidney, lung, and placenta. Expressed in lymphocytes.

The protein resides in the cytoplasm. The protein localises to the cell cortex. Its subcellular location is the nucleus. It is found in the golgi apparatus. It localises to the cell projection. The protein resides in the lamellipodium. The protein localises to the cell junction. Its subcellular location is the focal adhesion. It is found in the cytoskeleton. It localises to the spindle pole. The protein resides in the cilium. The protein localises to the cilium basal body. Its subcellular location is the basolateral cell membrane. It is found in the spindle. Functionally, scaffolding protein which plays a central coordinating role for tyrosine-kinase-based signaling related to cell adhesion. As a focal adhesion protein, plays a role in embryonic fibroblast migration. May play an important role in integrin beta-1 or B cell antigen receptor (BCR) mediated signaling in B- and T-cells. Integrin beta-1 stimulation leads to recruitment of various proteins including CRKL and SHPTP2 to the tyrosine phosphorylated form. Promotes adhesion and migration of lymphocytes; as a result required for the correct migration of lymphocytes to the spleen and other secondary lymphoid organs. Plays a role in the organization of T-cell F-actin cortical cytoskeleton and the centralization of T-cell receptor microclusters at the immunological synapse. Negatively regulates cilia outgrowth in polarized cysts. Modulates cilia disassembly via activation of AURKA-mediated phosphorylation of HDAC6 and subsequent deacetylation of alpha-tubulin. Positively regulates RANKL-induced osteoclastogenesis. Required for the maintenance of hippocampal dendritic spines in the dentate gyrus and CA1 regions, thereby involved in spatial learning and memory. This is Enhancer of filamentation 1 from Homo sapiens (Human).